We begin with the raw amino-acid sequence, 151 residues long: Acidic phospholipase A2 5 (151 aa).

A signal peptide spans 1–27; it reads MYPAHLLVLLAVCVSLLGAASIPARPL. Cystine bridges form between C38-C104, C54-C151, C56-C72, C71-C132, C78-C125, C88-C118, and C111-C123. The Ca(2+) site is built by Y55, G57, and G59. Residue H75 is part of the active site. A Ca(2+)-binding site is contributed by D76. D126 is an active-site residue.

Belongs to the phospholipase A2 family. Group I subfamily. D49 sub-subfamily. The cofactor is Ca(2+). As to expression, expressed by the venom gland.

Its subcellular location is the secreted. It carries out the reaction a 1,2-diacyl-sn-glycero-3-phosphocholine + H2O = a 1-acyl-sn-glycero-3-phosphocholine + a fatty acid + H(+). Functionally, PLA2 catalyzes the calcium-dependent hydrolysis of the 2-acyl groups in 3-sn-phosphoglycerides. This chain is Acidic phospholipase A2 5, found in Tropidechis carinatus (Australian rough-scaled snake).